An 822-amino-acid polypeptide reads, in one-letter code: Calpain-3 (822 aa).

Residues 1–36 (MPTVISASVAPRTGAEPMSPGPIAQAAQDKGTEAGG) are disordered. The Calpain catalytic domain maps to 74-418 (LFVDPEFPPD…FTKLEICNLT (345 aa)). Active-site residues include C129, H335, and N359. The interval 419–587 (ADALESDKLQ…KRNLSEEVEN (169 aa)) is domain III. The segment at 588–650 (TISVDRPVKK…EPGNTDQESE (63 aa)) is linker. The segment at 604–652 (IFVSDRANSNKELGVDQETEEGKDNTSPDKQAKSPQLEPGNTDQESEEQ) is disordered. The segment covering 623-635 (EEGKDNTSPDKQA) has biased composition (basic and acidic residues). EF-hand domains are found at residues 650 to 684 (EEQRQFRNIFRQIAGDDMEICADELKNVLNRVVNK), 693 to 726 (FTLESCRSMIALMDTDGSGRLNLQEFHHLWKKIK), 723 to 758 (KKIKTWQKIFKHYDTDQSGTINSYEMRNAVKDAGFH), and 788 to 822 (VRLEGMFRAFNAFDKDGDGIIKLNVLEWLQLTMYA). The tract at residues 651 to 822 (EQRQFRNIFR…LEWLQLTMYA (172 aa)) is domain IV. Residues A663, D666, E668, E673, D706, D708, S710, R712, E717, D736, D738, S740, T742, E747, D801, D803, D805, and I807 each coordinate Ca(2+).

This sequence belongs to the peptidase C2 family. Homodimer; via EF-hand domain 4. Interacts with TTN/titin. Interacts with CMYA5; this interaction, which results in CMYA5 proteolysis, may protect CAPN3 from autolysis. Interacts with SIMC1. Interacts with UTP25; the interaction is required for CAPN3 translocation to the nucleolus. Skeletal muscle.

It is found in the cytoplasm. Its subcellular location is the nucleus. The protein localises to the nucleolus. The enzyme catalyses Broad endopeptidase activity.. Its activity is regulated as follows. Activated by micromolar concentrations of calcium and inhibited by calpastatin. Functionally, calcium-regulated non-lysosomal thiol-protease. Proteolytically cleaves CTBP1. Mediates, with UTP25, the proteasome-independent degradation of p53/TP53. The chain is Calpain-3 (CAPN3) from Bos taurus (Bovine).